The primary structure comprises 519 residues: Sorting nexin-2 (519 aa).

A disordered region spans residues Met-1–Thr-104. Composition is skewed to low complexity over residues Leu-27–Glu-50 and Ser-93–Thr-104. Position 97 is a phosphoserine (Ser-97). 2 positions are modified to phosphothreonine: Thr-101 and Thr-104. 2 positions are modified to phosphoserine: Ser-117 and Ser-119. The PX domain occupies Phe-140–Arg-269. Residues Arg-183, Ser-185, Lys-211, and Arg-235 each coordinate a 1,2-diacyl-sn-glycero-3-phospho-(1D-myo-inositol-3-phosphate). At Ser-185 the chain carries Phosphoserine. Residues Gln-260–Ala-519 form an interaction with RhoG region. Ser-277 is modified (phosphoserine). A membrane-binding amphipathic helix region spans residues Gly-278–Met-295. The 221-residue stretch at Met-299–Ala-519 folds into the BAR domain. At Lys-469 the chain carries N6-acetyllysine.

It belongs to the sorting nexin family. Predominantly forms heterodimers with BAR domain-containing sorting nexins SNX5, SNX6 and SNX32; can self-associate to form homodimers. The heterodimers are proposed to self-assemble into helical arrays on the membrane to stabilize and expand local membrane curvature underlying endosomal tubule formation. Thought to be a component of the originally described retromer complex (also called SNX-BAR retromer) which is a pentamer containing the heterotrimeric retromer cargo-selective complex (CSC), also described as vacuolar protein sorting subcomplex (VPS), and a heterodimeric membrane-deforming subcomplex formed between SNX1 or SNX2 and SNX5 or SNX6 (also called SNX-BAR subcomplex); the respective CSC and SNX-BAR subcomplexes associate with low affinity. Interacts with SNX5, SNX6, SNX32, VPS26A, VPS29, VPS35, FNBP1, KALRN, RHOG (GDP-bound form).

The protein resides in the early endosome membrane. It is found in the cell projection. Its subcellular location is the lamellipodium. Its function is as follows. Involved in several stages of intracellular trafficking. Interacts with membranes containing phosphatidylinositol 3-phosphate (PtdIns(3P)) or phosphatidylinositol 3,5-bisphosphate (PtdIns(3,5)P2). Acts in part as component of the retromer membrane-deforming SNX-BAR subcomplex. The SNX-BAR retromer mediates retrograde transport of cargo proteins from endosomes to the trans-Golgi network (TGN) and is involved in endosome-to-plasma membrane transport for cargo protein recycling. The SNX-BAR subcomplex functions to deform the donor membrane into a tubular profile called endosome-to-TGN transport carrier (ETC). Can sense membrane curvature and has in vitro vesicle-to-membrane remodeling activity. Required for retrograde endosome-to-TGN transport of TGN38. Promotes KALRN- and RHOG-dependent but retromer-independent membrane remodeling such as lamellipodium formation; the function is dependent on GEF activity of KALRN. The chain is Sorting nexin-2 (SNX2) from Homo sapiens (Human).